The chain runs to 293 residues: Ribosomal protein L11 methyltransferase (293 aa).

Thr-145, Gly-166, Asp-188, and Asn-230 together coordinate S-adenosyl-L-methionine.

Belongs to the methyltransferase superfamily. PrmA family.

Its subcellular location is the cytoplasm. It carries out the reaction L-lysyl-[protein] + 3 S-adenosyl-L-methionine = N(6),N(6),N(6)-trimethyl-L-lysyl-[protein] + 3 S-adenosyl-L-homocysteine + 3 H(+). Methylates ribosomal protein L11. In Klebsiella pneumoniae subsp. pneumoniae (strain ATCC 700721 / MGH 78578), this protein is Ribosomal protein L11 methyltransferase.